A 78-amino-acid polypeptide reads, in one-letter code: Probable [Fe-S]-dependent transcriptional repressor (78 aa).

4 residues coordinate iron-sulfur cluster: C56, C61, C64, and C70.

It belongs to the FeoC family.

May function as a transcriptional regulator that controls feoABC expression. The protein is Probable [Fe-S]-dependent transcriptional repressor of Cronobacter sakazakii (strain ATCC BAA-894) (Enterobacter sakazakii).